Reading from the N-terminus, the 240-residue chain is Eukaryotic translation initiation factor 4E-3 (240 aa).

The interval 1 to 51 is disordered; the sequence is MVVTDSPVSGIMADQNIDPNTTTSPSPKEKHVSAIKAISGDEKAPSKEKKN. Polar residues predominate over residues 17–26; the sequence is IDPNTTTSPS. Positions 39-51 are enriched in basic and acidic residues; it reads SGDEKAPSKEKKN. 2 EIF4G-binding regions span residues 65 to 68 and 75 to 111; these read HCFQ and FDNP…NNIH. MRNA-binding positions include 83-88, Lys-115, and 133-134; these read NQVIWG and WE. An intrachain disulfide couples Cys-138 to Cys-176. An EIF4G-binding region spans residues 159–168; sequence NTLLALVGEQ. MRNA is bound by residues 183-188 and 228-232; these read RARGDR and KTLDR.

The protein belongs to the eukaryotic initiation factor 4E family. EIF4F is a multi-subunit complex, the composition of which varies with external and internal environmental conditions. It is composed of at least EIF4A, EIF4E and EIF4G. EIF4E is also known to interact with other partners. In higher plants two isoforms of EIF4F have been identified, named isoform EIF4F and isoform EIF(iso)4F. Isoform EIF4F has subunits p220 and p26, whereas isoform EIF(iso)4F has subunits p82 and p28. Post-translationally, according to the redox status, the Cys-138-Cys-176 disulfide bridge may have a role in regulating protein function by affecting its ability to bind capped mRNA.

It is found in the nucleus. The protein localises to the cytoplasm. Functionally, component of the protein complex eIF4F, which is involved in the recognition of the mRNA cap, ATP-dependent unwinding of 5'-terminal secondary structure and recruitment of mRNA to the ribosome. Recognizes and binds the 7-methylguanosine-containing mRNA cap during an early step in the initiation of protein synthesis and facilitates ribosome binding by inducing the unwinding of the mRNAs secondary structures. The polypeptide is Eukaryotic translation initiation factor 4E-3 (Arabidopsis thaliana (Mouse-ear cress)).